Here is a 696-residue protein sequence, read N- to C-terminus: SEC14 domain and spectrin repeat-containing protein 1 (696 aa).

Residues 1-153 enclose the CRAL-TRIO domain; that stretch reads MEASVILPIL…DFGGSLTYDH (153 aa). 3 Spectrin repeats span residues 275 to 378, 381 to 494, and 500 to 602; these read EEIQ…NLLQ, LEFH…LKML, and FKCE…HRLE.

It belongs to the SOLO family. As to quaternary structure, interacts (via the spectrin 1 repeat) with TRPC4 and TRPC5 (via CIRB domain). Interacts with CTNNB1.

Functionally, may act as the primary docking protein directing membrane turnover and assembly of the transient receptor potential channels TRPC4 and TRPC5. Binds phospholipids such as phosphatidylinositol monophosphates, phosphatidylinositol diphosphates (PIP2s) and phosphatidic acid, but not less polar lipids including phosphatidylcholine, phosphatidylserine, and phosphatidylinositol. The binding to PIP2s is calcium dependent. Might be involved in the plasma membrane localization of CTNNB1. The protein is SEC14 domain and spectrin repeat-containing protein 1 (Sestd1) of Mus musculus (Mouse).